A 119-amino-acid polypeptide reads, in one-letter code: uncharacterized protein (119 aa).

This is an uncharacterized protein from Escherichia coli (Bacteriophage T4).